A 59-amino-acid chain; its full sequence is MKILSIVLIALIICSISICTEAFGLIDVKCSASRECWVACKKVTGSGQGKCQNNQCRCY.

The N-terminal stretch at 1 to 22 (MKILSIVLIALIICSISICTEA) is a signal peptide. 3 cysteine pairs are disulfide-bonded: C30/C51, C36/C56, and C40/C58.

Belongs to the short scorpion toxin superfamily. Potassium channel inhibitor family. Alpha-KTx 16 subfamily. In terms of tissue distribution, expressed by the venom gland.

It localises to the secreted. Functionally, weak inhibitor of voltage-gated potassium channel hKv1.3/KCNA3. This is Potassium channel toxin alpha-KTx 16.4 from Mesobuthus eupeus (Lesser Asian scorpion).